The primary structure comprises 143 residues: FIS1-related protein fis-1 (143 aa).

A helical membrane pass occupies residues 121–141 (LGLLGGAVAVVGGLVIAGLAF).

The protein belongs to the FIS1 family.

It localises to the mitochondrion outer membrane. The protein localises to the peroxisome membrane. Its function is as follows. Involved in the fragmentation of the mitochondrial network. Involved in perinuclear clustering of the mitochondrial network. Plays a role in removal of ultraviolet C radiation-induced mitochondrial DNA damage. May act, redundantly with fis-2, downstream of mitochondrial fission, before the fission products participate in either mitochondrial homeostasis, mitophagy, or apoptosis. This Caenorhabditis elegans protein is FIS1-related protein fis-1.